Here is an 83-residue protein sequence, read N- to C-terminus: Cytochrome b559 subunit alpha (83 aa).

Residues 21-35 (VIHSITIPSLFIAGW) traverse the membrane as a helical segment. Residue His-23 coordinates heme.

This sequence belongs to the PsbE/PsbF family. Heterodimer of an alpha subunit and a beta subunit. PSII is composed of 1 copy each of membrane proteins PsbA, PsbB, PsbC, PsbD, PsbE, PsbF, PsbH, PsbI, PsbJ, PsbK, PsbL, PsbM, PsbT, PsbX, PsbY, PsbZ, Psb30/Ycf12, at least 3 peripheral proteins of the oxygen-evolving complex and a large number of cofactors. It forms dimeric complexes. Heme b serves as cofactor.

Its subcellular location is the plastid. The protein resides in the chloroplast thylakoid membrane. In terms of biological role, this b-type cytochrome is tightly associated with the reaction center of photosystem II (PSII). PSII is a light-driven water:plastoquinone oxidoreductase that uses light energy to abstract electrons from H(2)O, generating O(2) and a proton gradient subsequently used for ATP formation. It consists of a core antenna complex that captures photons, and an electron transfer chain that converts photonic excitation into a charge separation. The chain is Cytochrome b559 subunit alpha from Acorus calamus (Sweet flag).